The sequence spans 285 residues: Putative ABC transporter ATP-binding protein CPE0195 (285 aa).

One can recognise an ABC transporter domain in the interval 6-242; the sequence is LKVEELNYNY…KEVIRKVNLR (237 aa). 39 to 46 contributes to the ATP binding site; it reads GGNGVGKS.

The protein belongs to the ABC transporter superfamily.

It localises to the cell membrane. Functionally, probably part of an ABC transporter complex. Responsible for energy coupling to the transport system. This chain is Putative ABC transporter ATP-binding protein CPE0195, found in Clostridium perfringens (strain 13 / Type A).